The following is a 265-amino-acid chain: Triosephosphate isomerase (265 aa).

13-15 contacts substrate; sequence NWK. Histidine 106 (electrophile) is an active-site residue. The active-site Proton acceptor is glutamate 179. Residues glycine 185, serine 223, and 244 to 245 each bind substrate; that span reads GG.

This sequence belongs to the triosephosphate isomerase family. In terms of assembly, homodimer.

It localises to the cytoplasm. It carries out the reaction D-glyceraldehyde 3-phosphate = dihydroxyacetone phosphate. It functions in the pathway carbohydrate biosynthesis; gluconeogenesis. The protein operates within carbohydrate degradation; glycolysis; D-glyceraldehyde 3-phosphate from glycerone phosphate: step 1/1. In terms of biological role, involved in the gluconeogenesis. Catalyzes stereospecifically the conversion of dihydroxyacetone phosphate (DHAP) to D-glyceraldehyde-3-phosphate (G3P). This is Triosephosphate isomerase from Acinetobacter baylyi (strain ATCC 33305 / BD413 / ADP1).